Consider the following 406-residue polypeptide: Phosphorylase b kinase gamma catalytic chain, liver/testis isoform (406 aa).

The 268-residue stretch at 24-291 (YDPKDIIGRG…AEQALQHPFF (268 aa)) folds into the Protein kinase domain. Residues 30–38 (IGRGVSSVV) and Lys53 contribute to the ATP site. Residue Asp153 is the Proton acceptor of the active site. A calmodulin-binding (domain-N) region spans residues 306–330 (QRFRVAVWTILAAGRVALSSHRLRP). Positions 346–370 (VRRLIDNCAFRLYGHWVKKGEQQNR) are calmodulin-binding (domain-C).

The protein belongs to the protein kinase superfamily. CAMK Ser/Thr protein kinase family. As to quaternary structure, hexadecamer of 4 heterotetramers, each composed of alpha, beta, gamma, and delta subunits. Alpha (PHKA1 or PHKA2) and beta (PHKB) are regulatory subunits, gamma (PHKG1 or PHKG2) is the catalytic subunit, and delta is calmodulin.

The catalysed reaction is 2 ATP + phosphorylase b = 2 ADP + phosphorylase a.. Its function is as follows. Catalytic subunit of the phosphorylase b kinase (PHK), which mediates the neural and hormonal regulation of glycogen breakdown (glycogenolysis) by phosphorylating and thereby activating glycogen phosphorylase. May regulate glycogeneolysis in the testis. In vitro, phosphorylates PYGM. The sequence is that of Phosphorylase b kinase gamma catalytic chain, liver/testis isoform (Phkg2) from Rattus norvegicus (Rat).